The sequence spans 65 residues: Large ribosomal subunit protein bL35 (65 aa).

Residues 30–65 (AFRSHLAQNKSTKQKRQSKHGTFMHPTDYKRLKDLM) are disordered. Residues 56–65 (TDYKRLKDLM) are compositionally biased toward basic and acidic residues.

It belongs to the bacterial ribosomal protein bL35 family.

This is Large ribosomal subunit protein bL35 from Mycoplasma mobile (strain ATCC 43663 / 163K / NCTC 11711) (Mesomycoplasma mobile).